We begin with the raw amino-acid sequence, 153 residues long: UPF0178 protein Atu1478 (153 aa).

This sequence belongs to the UPF0178 family.

This Agrobacterium fabrum (strain C58 / ATCC 33970) (Agrobacterium tumefaciens (strain C58)) protein is UPF0178 protein Atu1478.